The chain runs to 221 residues: Small ribosomal subunit protein uS3 (221 aa).

In terms of domain architecture, KH type-2 spans Ile39–Lys107.

This sequence belongs to the universal ribosomal protein uS3 family. As to quaternary structure, part of the 30S ribosomal subunit. Forms a tight complex with proteins S10 and S14.

Functionally, binds the lower part of the 30S subunit head. Binds mRNA in the 70S ribosome, positioning it for translation. This is Small ribosomal subunit protein uS3 from Caldanaerobacter subterraneus subsp. tengcongensis (strain DSM 15242 / JCM 11007 / NBRC 100824 / MB4) (Thermoanaerobacter tengcongensis).